The chain runs to 509 residues: Activin receptor type-1 (509 aa).

Residues 1–20 form the signal peptide; it reads MVDGVMILPVLMMMAFPSPS. Residues 21–123 are Extracellular-facing; sequence VEDEKPKVNQ…FPGTQNFHLE (103 aa). An N-linked (GlcNAc...) asparagine glycan is attached at Asn-102. Residues 124–146 form a helical membrane-spanning segment; it reads VGLIILSVVFAVCLLACILGVAL. The Cytoplasmic segment spans residues 147-509; sequence RKFKRRNQER…NSLDKLKTDC (363 aa). In terms of domain architecture, GS spans 178–207; the sequence is STLAELLDHSCTSGSGSGLPFLVQRTVARQ. A Protein kinase domain is found at 208–502; it reads ITLLECVGKG…KTLTKIDNSL (295 aa). ATP contacts are provided by residues 214–222 and Lys-235; that span reads VGKGRYGEV. The active-site Proton acceptor is the Asp-336. Ser-501 bears the Phosphoserine mark.

The protein belongs to the protein kinase superfamily. TKL Ser/Thr protein kinase family. TGFB receptor subfamily. Interacts with FKBP1A. Interacts with FCHO1. Interacts with CLU. Interacts with type II receptors AMHR2 and ACVR2A. Interacts with BMP7. Interacts with BMP9. Interacts with BMP6 (when glycosylated); the interaction may induce HAMP expression. Interacts with TSC22D1/TSC-22. Requires Mg(2+) as cofactor. Mn(2+) serves as cofactor. Highly expressed in bone during developmental stages. Expressed in normal parenchymal cells, endothelial cells, fibroblasts and tumor-derived epithelial cells.

It localises to the membrane. It carries out the reaction L-threonyl-[receptor-protein] + ATP = O-phospho-L-threonyl-[receptor-protein] + ADP + H(+). It catalyses the reaction L-seryl-[receptor-protein] + ATP = O-phospho-L-seryl-[receptor-protein] + ADP + H(+). Its function is as follows. Bone morphogenetic protein (BMP) type I receptor that is involved in a wide variety of biological processes, including bone, heart, cartilage, nervous, and reproductive system development and regulation. As a type I receptor, forms heterotetrameric receptor complexes with the type II receptors AMHR2, ACVR2A ors ACVR2B. Upon binding of ligands such as BMP7 or BMP9 to the heteromeric complexes, type II receptors transphosphorylate ACVR1 intracellular domain. In turn, ACVR1 kinase domain is activated and subsequently phosphorylates SMAD1/5/8 proteins that transduce the signal. In addition to its role in mediating BMP pathway-specific signaling, suppresses TGFbeta/activin pathway signaling by interfering with the binding of activin to its type II receptor. Besides canonical SMAD signaling, can activate non-canonical pathways such as p38 mitogen-activated protein kinases/MAPKs. May promote the expression of HAMP, potentially via its interaction with BMP6. This is Activin receptor type-1 (Acvr1) from Mus musculus (Mouse).